A 206-amino-acid chain; its full sequence is Large ribosomal subunit protein uL4 (206 aa).

It belongs to the universal ribosomal protein uL4 family. In terms of assembly, part of the 50S ribosomal subunit.

One of the primary rRNA binding proteins, this protein initially binds near the 5'-end of the 23S rRNA. It is important during the early stages of 50S assembly. It makes multiple contacts with different domains of the 23S rRNA in the assembled 50S subunit and ribosome. Its function is as follows. Forms part of the polypeptide exit tunnel. The protein is Large ribosomal subunit protein uL4 of Rhodopseudomonas palustris (strain BisB18).